A 260-amino-acid polypeptide reads, in one-letter code: Acyl-[acyl-carrier-protein]--UDP-N-acetylglucosamine O-acyltransferase (260 aa).

The protein belongs to the transferase hexapeptide repeat family. LpxA subfamily. As to quaternary structure, homotrimer.

It localises to the cytoplasm. The catalysed reaction is a (3R)-hydroxyacyl-[ACP] + UDP-N-acetyl-alpha-D-glucosamine = a UDP-3-O-[(3R)-3-hydroxyacyl]-N-acetyl-alpha-D-glucosamine + holo-[ACP]. It functions in the pathway glycolipid biosynthesis; lipid IV(A) biosynthesis; lipid IV(A) from (3R)-3-hydroxytetradecanoyl-[acyl-carrier-protein] and UDP-N-acetyl-alpha-D-glucosamine: step 1/6. Functionally, involved in the biosynthesis of lipid A, a phosphorylated glycolipid that anchors the lipopolysaccharide to the outer membrane of the cell. This is Acyl-[acyl-carrier-protein]--UDP-N-acetylglucosamine O-acyltransferase from Sulfurovum sp. (strain NBC37-1).